The chain runs to 253 residues: Ditrans,polycis-undecaprenyl-diphosphate synthase ((2E,6E)-farnesyl-diphosphate specific) (253 aa).

Residue Asp25 is part of the active site. Asp25 is a binding site for Mg(2+). Residues 26–29, Trp30, Arg38, His42, and 70–72 contribute to the substrate site; these read GNGR and SSE. Asn73 (proton acceptor) is an active-site residue. Substrate contacts are provided by Trp74, Arg76, and Arg193. His198 provides a ligand contact to Mg(2+). 199–201 is a substrate binding site; the sequence is RIS. Glu212 contacts Mg(2+).

This sequence belongs to the UPP synthase family. As to quaternary structure, homodimer. The cofactor is Mg(2+).

It carries out the reaction 8 isopentenyl diphosphate + (2E,6E)-farnesyl diphosphate = di-trans,octa-cis-undecaprenyl diphosphate + 8 diphosphate. In terms of biological role, catalyzes the sequential condensation of isopentenyl diphosphate (IPP) with (2E,6E)-farnesyl diphosphate (E,E-FPP) to yield (2Z,6Z,10Z,14Z,18Z,22Z,26Z,30Z,34E,38E)-undecaprenyl diphosphate (di-trans,octa-cis-UPP). UPP is the precursor of glycosyl carrier lipid in the biosynthesis of bacterial cell wall polysaccharide components such as peptidoglycan and lipopolysaccharide. The polypeptide is Ditrans,polycis-undecaprenyl-diphosphate synthase ((2E,6E)-farnesyl-diphosphate specific) (Pectobacterium atrosepticum (strain SCRI 1043 / ATCC BAA-672) (Erwinia carotovora subsp. atroseptica)).